The primary structure comprises 913 residues: Valine--tRNA ligase (913 aa).

The 'HIGH' region motif lies at 49 to 59 (PNVTGNLHLGH). Positions 544–548 (KMSKS) match the 'KMSKS' region motif. Lysine 547 contacts ATP. Residues 851–912 (DWVKKQQKRL…ERLEGVLAQL (62 aa)) adopt a coiled-coil conformation.

The protein belongs to the class-I aminoacyl-tRNA synthetase family. ValS type 1 subfamily. In terms of assembly, monomer.

It localises to the cytoplasm. The catalysed reaction is tRNA(Val) + L-valine + ATP = L-valyl-tRNA(Val) + AMP + diphosphate. In terms of biological role, catalyzes the attachment of valine to tRNA(Val). As ValRS can inadvertently accommodate and process structurally similar amino acids such as threonine, to avoid such errors, it has a 'posttransfer' editing activity that hydrolyzes mischarged Thr-tRNA(Val) in a tRNA-dependent manner. The chain is Valine--tRNA ligase from Deinococcus radiodurans (strain ATCC 13939 / DSM 20539 / JCM 16871 / CCUG 27074 / LMG 4051 / NBRC 15346 / NCIMB 9279 / VKM B-1422 / R1).